A 512-amino-acid chain; its full sequence is GMP synthase [glutamine-hydrolyzing] (512 aa).

The 190-residue stretch at 6–195 (KIIILDFGSQ…VFNICGCQPK (190 aa)) folds into the Glutamine amidotransferase type-1 domain. Cys-83 functions as the Nucleophile in the catalytic mechanism. Active-site residues include His-169 and Glu-171. The region spanning 196-387 (WKITEFISAA…LGIDFKFVYK (192 aa)) is the GMPS ATP-PPase domain. Residue 223–229 (SGGVDSS) coordinates ATP.

Homodimer.

It catalyses the reaction XMP + L-glutamine + ATP + H2O = GMP + L-glutamate + AMP + diphosphate + 2 H(+). Its pathway is purine metabolism; GMP biosynthesis; GMP from XMP (L-Gln route): step 1/1. Functionally, catalyzes the synthesis of GMP from XMP. The sequence is that of GMP synthase [glutamine-hydrolyzing] from Spiroplasma kunkelii.